The following is a 623-amino-acid chain: NAD-dependent malic enzyme, mitochondrial (623 aa).

The N-terminal 31 residues, 1-31, are a transit peptide targeting the mitochondrion; sequence MLVLCSRSRLTSSLIRRLKDQIANVSNHRSF. The fumarate site is built by Arg-88 and Arg-122. Ser-143 acts as the Proton donor in catalysis. A (S)-malate-binding site is contributed by Arg-196. Arg-196 is an NAD(+) binding site. The active-site Proton acceptor is the Lys-214. Positions 285 and 286 each coordinate a divalent metal cation. Asn-289 serves as a coordination point for NAD(+). Asp-309 is an a divalent metal cation binding site. Ala-345 contacts NAD(+). Residues Asn-464 and Asn-509 each contribute to the (S)-malate site.

The protein belongs to the malic enzymes family. In terms of assembly, heterodimer of two related subunits. Mg(2+) is required as a cofactor. Mn(2+) serves as cofactor.

The protein resides in the mitochondrion matrix. The catalysed reaction is (S)-malate + NAD(+) = pyruvate + CO2 + NADH. Its pathway is photosynthesis; C4 acid pathway. The protein is NAD-dependent malic enzyme, mitochondrial of Amaranthus hypochondriacus (Prince-of-Wales feather).